Consider the following 147-residue polypeptide: Hemoglobin subunit delta (147 aa).

V2 carries the N-acetylalanine; in variant Niigata modification. A Globin domain is found at 3–147 (HLTPEEKTAV…VANALAHKYH (145 aa)). S51 bears the Phosphoserine mark. Heme b contacts are provided by H64 and H93.

It belongs to the globin family. As to quaternary structure, heterotetramer of two alpha chains and two delta chains in adult hemoglobin A2 (HbA2). HbA2 represents less than 3.5% of adult hemoglobin. Red blood cells.

Functionally, involved in oxygen transport from the lung to the various peripheral tissues. The protein is Hemoglobin subunit delta (HBD) of Homo sapiens (Human).